Here is a 40-residue protein sequence, read N- to C-terminus: Natriuretic peptide PaNP-b (40 aa).

A disulfide bridge connects residues cysteine 9 and cysteine 25. A propeptide spanning residues 36–40 (IPGGS) is cleaved from the precursor.

The protein belongs to the natriuretic peptide family. In terms of tissue distribution, expressed by the venom gland.

It localises to the secreted. Snake venom natriuretic peptide that targets both NPR1 and NPR2. Exhibits hypotensive and vasodepressor activities. The protein is Natriuretic peptide PaNP-b of Pseudechis australis (Mulga snake).